We begin with the raw amino-acid sequence, 1483 residues long: Heme-responsive zinc finger transcription factor HAP1 (1483 aa).

Over residues 1–50 (MSNTPYNSSVPSIASMTQSSVSRSPNMHTATTPGANTSSNSPPLHMSSDS) the composition is skewed to polar residues. Residues 1–56 (MSNTPYNSSVPSIASMTQSSVSRSPNMHTATTPGANTSSNSPPLHMSSDSSKIKRK) are disordered. 6 residues coordinate Zn(2+): C64, C67, C74, C81, C84, and C93. Positions 64-93 (CTICRKRKVKCDKLRPHCQQCTKTGVAHLC) form a DNA-binding region, zn(2)-C6 fungal-type. Residues 105 to 134 (EKELLKDNELKKLRERVKSLEKTLSKVHSS) adopt a coiled-coil conformation. Residues 162-176 (VNANTGSASSASHMH) show a composition bias toward polar residues. A disordered region spans residues 162-208 (VNANTGSASSASHMHQQQQQQQQQEQQQDFSRSANANANSSSLSISN). The segment covering 177 to 208 (QQQQQQQQQEQQQDFSRSANANANSSSLSISN) has biased composition (low complexity). The tract at residues 244–444 (KGDPYLKLLW…NTIPHHQPQS (201 aa)) is heme-responsive; required for HMC formation. HRM repeat units lie at residues 280–285 (KCPINH), 299–304 (KCPVDH), 323–328 (KCPVDH), 347–352 (RCPVDH), 389–394 (KCPVDH), and 415–420 (RCPIDH). Polar residues-rich tracts occupy residues 432–447 (STHN…SGSH) and 706–734 (QLNA…NPTL). Disordered stretches follow at residues 432-458 (STHN…NRKH) and 706-767 (QLNA…KENQ). Over residues 735–759 (NNNMSAATTNSSSRSGSADSRSGSN) the composition is skewed to low complexity. Residues 1192-1197 (KCPVYQ) form an HRM 7 repeat. The segment at 1384-1411 (TANTDTSANGSALSTLTSPQGSDLASNS) is disordered. Over residues 1388 to 1411 (DTSANGSALSTLTSPQGSDLASNS) the composition is skewed to polar residues.

Binds DNA as a homodimer. Interacts with SRO9 and YDJ1. In the absence of heme, binds to at least four cellular proteins, including YDJ1 and SRO9, forming a high-molecular-weight complex (HMC) which results in repression of its activity and dictates its DNA-binding specificity.

It is found in the nucleus. Regulation of oxygen dependent gene expression. It modulates the expression of Iso-1 (CYP1) and Iso-2 (CYP3) cytochrome c. In response to heme, promotes transcription of genes encoding functions required for respiration, controlling oxidative damage and repression of anaerobic genes. Binds to the sequence 5'-CGGNNNTNNCGG-3'. The chain is Heme-responsive zinc finger transcription factor HAP1 (HAP1) from Saccharomyces cerevisiae (strain RM11-1a) (Baker's yeast).